A 137-amino-acid polypeptide reads, in one-letter code: ATP synthase epsilon chain (137 aa).

Belongs to the ATPase epsilon chain family. As to quaternary structure, F-type ATPases have 2 components, CF(1) - the catalytic core - and CF(0) - the membrane proton channel. CF(1) has five subunits: alpha(3), beta(3), gamma(1), delta(1), epsilon(1). CF(0) has three main subunits: a, b and c.

It is found in the cell inner membrane. Its function is as follows. Produces ATP from ADP in the presence of a proton gradient across the membrane. The polypeptide is ATP synthase epsilon chain (Ruegeria sp. (strain TM1040) (Silicibacter sp.)).